The following is a 564-amino-acid chain: Septation ring formation regulator EzrA (564 aa).

Over methionine 1–tyrosine 4 the chain is Extracellular. A helical transmembrane segment spans residues isoleucine 5–leucine 23. The Cytoplasmic segment spans residues arginine 24–glutamine 564. 5 coiled-coil regions span residues serine 99–asparagine 138, aspartate 190–glutamate 223, leucine 271–histidine 300, valine 350–leucine 435, and valine 471–glutamate 550.

It belongs to the EzrA family.

The protein resides in the cell membrane. Its function is as follows. Negative regulator of FtsZ ring formation; modulates the frequency and position of FtsZ ring formation. Inhibits FtsZ ring formation at polar sites. Interacts either with FtsZ or with one of its binding partners to promote depolymerization. In Staphylococcus aureus (strain Mu3 / ATCC 700698), this protein is Septation ring formation regulator EzrA.